The primary structure comprises 79 residues: D-alanyl carrier protein (79 aa).

The 77-residue stretch at 1-77 (MSTKETVIDL…KIIQGIEELQ (77 aa)) folds into the Carrier domain. Serine 35 carries the post-translational modification O-(pantetheine 4'-phosphoryl)serine.

The protein belongs to the DltC family. Post-translationally, 4'-phosphopantetheine is transferred from CoA to a specific serine of apo-DCP.

The protein resides in the cytoplasm. It participates in cell wall biogenesis; lipoteichoic acid biosynthesis. Carrier protein involved in the D-alanylation of lipoteichoic acid (LTA). The loading of thioester-linked D-alanine onto DltC is catalyzed by D-alanine--D-alanyl carrier protein ligase DltA. The DltC-carried D-alanyl group is further transferred to cell membrane phosphatidylglycerol (PG) by forming an ester bond, probably catalyzed by DltD. D-alanylation of LTA plays an important role in modulating the properties of the cell wall in Gram-positive bacteria, influencing the net charge of the cell wall. The sequence is that of D-alanyl carrier protein from Streptococcus equi subsp. equi (strain 4047).